A 394-amino-acid polypeptide reads, in one-letter code: Dual-specificity RNA methyltransferase RlmN (394 aa).

The Proton acceptor role is filled by Glu-115. The region spanning 121-363 (DEGRGTLCVS…SPIRTPRGED (243 aa)) is the Radical SAM core domain. Cys-128 and Cys-368 are disulfide-bonded. Residues Cys-135, Cys-139, and Cys-142 each coordinate [4Fe-4S] cluster. S-adenosyl-L-methionine contacts are provided by residues 194 to 195 (GE), Ser-226, 248 to 250 (SFH), and Asn-325. Cys-368 (S-methylcysteine intermediate) is an active-site residue.

This sequence belongs to the radical SAM superfamily. RlmN family. The cofactor is [4Fe-4S] cluster.

The protein resides in the cytoplasm. The enzyme catalyses adenosine(2503) in 23S rRNA + 2 reduced [2Fe-2S]-[ferredoxin] + 2 S-adenosyl-L-methionine = 2-methyladenosine(2503) in 23S rRNA + 5'-deoxyadenosine + L-methionine + 2 oxidized [2Fe-2S]-[ferredoxin] + S-adenosyl-L-homocysteine. It carries out the reaction adenosine(37) in tRNA + 2 reduced [2Fe-2S]-[ferredoxin] + 2 S-adenosyl-L-methionine = 2-methyladenosine(37) in tRNA + 5'-deoxyadenosine + L-methionine + 2 oxidized [2Fe-2S]-[ferredoxin] + S-adenosyl-L-homocysteine. In terms of biological role, specifically methylates position 2 of adenine 2503 in 23S rRNA and position 2 of adenine 37 in tRNAs. m2A2503 modification seems to play a crucial role in the proofreading step occurring at the peptidyl transferase center and thus would serve to optimize ribosomal fidelity. The protein is Dual-specificity RNA methyltransferase RlmN of Roseobacter denitrificans (strain ATCC 33942 / OCh 114) (Erythrobacter sp. (strain OCh 114)).